The primary structure comprises 348 residues: Dihydroorotase (348 aa).

Residues histidine 17 and histidine 19 each contribute to the Zn(2+) site. Residues histidine 19–arginine 21 and asparagine 45 contribute to the substrate site. Residues lysine 103, histidine 140, and histidine 178 each coordinate Zn(2+). Residue lysine 103 is modified to N6-carboxylysine. Histidine 140 contributes to the substrate binding site. Leucine 223 provides a ligand contact to substrate. Aspartate 251 contributes to the Zn(2+) binding site. Aspartate 251 is an active-site residue. Histidine 255 and alanine 267 together coordinate substrate.

This sequence belongs to the metallo-dependent hydrolases superfamily. DHOase family. Class II DHOase subfamily. As to quaternary structure, homodimer. Requires Zn(2+) as cofactor.

The catalysed reaction is (S)-dihydroorotate + H2O = N-carbamoyl-L-aspartate + H(+). It participates in pyrimidine metabolism; UMP biosynthesis via de novo pathway; (S)-dihydroorotate from bicarbonate: step 3/3. Its function is as follows. Catalyzes the reversible cyclization of carbamoyl aspartate to dihydroorotate. The polypeptide is Dihydroorotase (Yersinia pestis).